The sequence spans 160 residues: Large ribosomal subunit protein bL9 (160 aa).

The protein belongs to the bacterial ribosomal protein bL9 family.

Functionally, binds to the 23S rRNA. This is Large ribosomal subunit protein bL9 from Neorickettsia sennetsu (strain ATCC VR-367 / Miyayama) (Ehrlichia sennetsu).